A 654-amino-acid polypeptide reads, in one-letter code: Periplasmic beta-glucosidase/beta-xylosidase (654 aa).

Positions 1-25 are cleaved as a signal peptide; it reads MEKSATRQKALLIALPLLFSPLASA. Residues Asp-235 and Asp-360 contribute to the active site.

This sequence belongs to the glycosyl hydrolase 3 family.

It localises to the periplasm. The catalysed reaction is Hydrolysis of terminal, non-reducing beta-D-glucosyl residues with release of beta-D-glucose.. It carries out the reaction Hydrolysis of (1-&gt;4)-beta-D-xylans, to remove successive D-xylose residues from the non-reducing termini.. In terms of biological role, exhibits both beta-glucosidase and beta-xylosidase activities. The sequence is that of Periplasmic beta-glucosidase/beta-xylosidase (bgxA) from Dickeya chrysanthemi (Pectobacterium chrysanthemi).